Consider the following 320-residue polypeptide: Stress-involved WYL domain-containing regulator (320 aa).

The 59-residue stretch at 7 to 65 (TTGRVVQLLGLLQSRRVWTGEELAERLGVTGRSVRRDIERLRELGYPVHASKGQGGGYQ) folds into the HTH deoR-type domain. Residues 24 to 43 (WTGEELAERLGVTGRSVRRD) constitute a DNA-binding region (H-T-H motif). Residues 139–218 (DTAVAPDVLM…SDVRATGTTF (80 aa)) form the WYL domain. The tract at residues 245–320 (VRYFAPEKVV…MADRLRRAVR (76 aa)) is WCX domain.

In terms of assembly, homodimer.

Its function is as follows. Transcriptional activator. Acts as a transcriptional activator of the MSMEG_1357-56 operon upon genotoxic stress. Controls adjacent genes that belong to the DinB/YfiT-like putative metalloenzymes superfamily by upregulating their expression in response to various genotoxic stress conditions, including exposure to H(2)O(2) or the natural antibiotic zeocin, as well as mitomycin C (MMC), diamide and UVC radiation. Upon genotoxic stress, upregulates two genes encoding proteins of the DinB/YfiT-like putative metalloenzymes superfamily, MSMEG_1357 and MSMEG_1356. Binds different forms of single-stranded DNA (ssDNA) with high affinity, primarily through its characteristic WYL domain. Binds nucleic acids with single-stranded regions, such as polyT 20mer ssDNA, 5' tailed, 3' tailed and fork DNA, but not ssRNA. The sequence is that of Stress-involved WYL domain-containing regulator from Mycolicibacterium smegmatis (strain ATCC 700084 / mc(2)155) (Mycobacterium smegmatis).